The primary structure comprises 194 residues: Flagellar transcriptional regulator FlhC (194 aa).

Zn(2+) contacts are provided by cysteine 139, cysteine 142, cysteine 159, and cysteine 162.

The protein belongs to the FlhC family. As to quaternary structure, heterohexamer composed of two FlhC and four FlhD subunits. Each FlhC binds a FlhD dimer, forming a heterotrimer, and a hexamer assembles by dimerization of two heterotrimers. Zn(2+) serves as cofactor.

The protein resides in the cytoplasm. Functionally, functions in complex with FlhD as a master transcriptional regulator that regulates transcription of several flagellar and non-flagellar operons by binding to their promoter region. Activates expression of class 2 flagellar genes, including fliA, which is a flagellum-specific sigma factor that turns on the class 3 genes. Also regulates genes whose products function in a variety of physiological pathways. The protein is Flagellar transcriptional regulator FlhC of Xenorhabdus nematophila (Achromobacter nematophilus).